Consider the following 743-residue polypeptide: Phosphoribosylformylglycinamidine synthase subunit PurL (743 aa).

Residue His50 is part of the active site. Residues Tyr53 and Lys92 each contribute to the ATP site. Mg(2+) is bound at residue Glu94. Residues 95–98 (SHNH) and Arg117 each bind substrate. Residue His96 is the Proton acceptor of the active site. A Mg(2+)-binding site is contributed by Asp118. Substrate is bound at residue Gln241. Asp269 lines the Mg(2+) pocket. 313–315 (ESQ) lines the substrate pocket. ATP-binding residues include Asp494 and Gly531. Asn532 is a Mg(2+) binding site. A substrate-binding site is contributed by Ser534.

It belongs to the FGAMS family. As to quaternary structure, monomer. Part of the FGAM synthase complex composed of 1 PurL, 1 PurQ and 2 PurS subunits.

Its subcellular location is the cytoplasm. The catalysed reaction is N(2)-formyl-N(1)-(5-phospho-beta-D-ribosyl)glycinamide + L-glutamine + ATP + H2O = 2-formamido-N(1)-(5-O-phospho-beta-D-ribosyl)acetamidine + L-glutamate + ADP + phosphate + H(+). The protein operates within purine metabolism; IMP biosynthesis via de novo pathway; 5-amino-1-(5-phospho-D-ribosyl)imidazole from N(2)-formyl-N(1)-(5-phospho-D-ribosyl)glycinamide: step 1/2. Its function is as follows. Part of the phosphoribosylformylglycinamidine synthase complex involved in the purines biosynthetic pathway. Catalyzes the ATP-dependent conversion of formylglycinamide ribonucleotide (FGAR) and glutamine to yield formylglycinamidine ribonucleotide (FGAM) and glutamate. The FGAM synthase complex is composed of three subunits. PurQ produces an ammonia molecule by converting glutamine to glutamate. PurL transfers the ammonia molecule to FGAR to form FGAM in an ATP-dependent manner. PurS interacts with PurQ and PurL and is thought to assist in the transfer of the ammonia molecule from PurQ to PurL. The protein is Phosphoribosylformylglycinamidine synthase subunit PurL of Sinorhizobium fredii (strain HH103).